The chain runs to 153 residues: NAD(P)H-quinone oxidoreductase subunit N (153 aa).

Belongs to the complex I NdhN subunit family. In terms of assembly, NDH-1 can be composed of about 15 different subunits; different subcomplexes with different compositions have been identified which probably have different functions.

It is found in the cellular thylakoid membrane. It catalyses the reaction a plastoquinone + NADH + (n+1) H(+)(in) = a plastoquinol + NAD(+) + n H(+)(out). The catalysed reaction is a plastoquinone + NADPH + (n+1) H(+)(in) = a plastoquinol + NADP(+) + n H(+)(out). In terms of biological role, NDH-1 shuttles electrons from an unknown electron donor, via FMN and iron-sulfur (Fe-S) centers, to quinones in the respiratory and/or the photosynthetic chain. The immediate electron acceptor for the enzyme in this species is believed to be plastoquinone. Couples the redox reaction to proton translocation, and thus conserves the redox energy in a proton gradient. Cyanobacterial NDH-1 also plays a role in inorganic carbon-concentration. The polypeptide is NAD(P)H-quinone oxidoreductase subunit N (Parasynechococcus marenigrum (strain WH8102)).